A 316-amino-acid chain; its full sequence is Leucine-rich repeat-containing protein 73 (316 aa).

LRR repeat units follow at residues 57–78, 86–106, 114–137, 145–166, 174–187, 202–223, and 231–250; these read SLAQ…KQLA, SIQS…ALLN, ALVA…CGLL, GLKE…SRLA, QVRV…PLGD, TLEV…TLLD, and ALRS…QQQI. The interval 257–296 is disordered; that stretch reads GEEEEEMAGGAADTQEWGRGREPAAHQRGGSSWKCPSDPN. The span at 272 to 281 shows a compositional bias: basic and acidic residues; the sequence is EWGRGREPAA.

In Rattus norvegicus (Rat), this protein is Leucine-rich repeat-containing protein 73 (Lrrc73).